A 298-amino-acid polypeptide reads, in one-letter code: Nucleotide-binding protein GTNG_3015 (298 aa).

17–24 lines the ATP pocket; that stretch reads GMSGAGKT. 68 to 71 contributes to the GTP binding site; sequence DLRS.

The protein belongs to the RapZ-like family.

Functionally, displays ATPase and GTPase activities. In Geobacillus thermodenitrificans (strain NG80-2), this protein is Nucleotide-binding protein GTNG_3015.